A 333-amino-acid chain; its full sequence is uncharacterized protein (333 aa).

The segment at 234-333 (PPLAPTSAPA…GLSSEFDSDD (100 aa)) is disordered. Residues 251 to 265 (VPPPVPAPPTPPPQE) are compositionally biased toward pro residues. The segment covering 324-333 (GLSSEFDSDD) has biased composition (polar residues).

It localises to the cell projection. It is found in the cilium. The protein localises to the flagellum. This is an uncharacterized protein from Homo sapiens (Human).